The following is a 226-amino-acid chain: Putative O-methyltransferase Mvan_4497 (226 aa).

S-adenosyl-L-methionine contacts are provided by residues Val-53, Glu-75, 77 to 78 (GT), Ser-83, Asp-101, and Val-102. Substrate is bound at residue Asp-149.

This sequence belongs to the class I-like SAM-binding methyltransferase superfamily. Cation-dependent O-methyltransferase family.

The protein is Putative O-methyltransferase Mvan_4497 of Mycolicibacterium vanbaalenii (strain DSM 7251 / JCM 13017 / BCRC 16820 / KCTC 9966 / NRRL B-24157 / PYR-1) (Mycobacterium vanbaalenii).